We begin with the raw amino-acid sequence, 378 residues long: UDP-N-acetylglucosamine--N-acetylmuramyl-(pentapeptide) pyrophosphoryl-undecaprenol N-acetylglucosamine transferase (378 aa).

Residues threonine 24–glycine 26, asparagine 144, arginine 181, serine 215, and glutamine 310 contribute to the UDP-N-acetyl-alpha-D-glucosamine site.

Belongs to the glycosyltransferase 28 family. MurG subfamily.

It is found in the cell membrane. The catalysed reaction is di-trans,octa-cis-undecaprenyl diphospho-N-acetyl-alpha-D-muramoyl-L-alanyl-D-glutamyl-meso-2,6-diaminopimeloyl-D-alanyl-D-alanine + UDP-N-acetyl-alpha-D-glucosamine = di-trans,octa-cis-undecaprenyl diphospho-[N-acetyl-alpha-D-glucosaminyl-(1-&gt;4)]-N-acetyl-alpha-D-muramoyl-L-alanyl-D-glutamyl-meso-2,6-diaminopimeloyl-D-alanyl-D-alanine + UDP + H(+). It functions in the pathway cell wall biogenesis; peptidoglycan biosynthesis. Cell wall formation. Catalyzes the transfer of a GlcNAc subunit on undecaprenyl-pyrophosphoryl-MurNAc-pentapeptide (lipid intermediate I) to form undecaprenyl-pyrophosphoryl-MurNAc-(pentapeptide)GlcNAc (lipid intermediate II). In Nocardia farcinica (strain IFM 10152), this protein is UDP-N-acetylglucosamine--N-acetylmuramyl-(pentapeptide) pyrophosphoryl-undecaprenol N-acetylglucosamine transferase.